Here is a 79-residue protein sequence, read N- to C-terminus: Probable [Fe-S]-dependent transcriptional repressor (79 aa).

C56, C61, C64, and C70 together coordinate iron-sulfur cluster.

It belongs to the FeoC family.

May function as a transcriptional regulator that controls feoABC expression. This is Probable [Fe-S]-dependent transcriptional repressor from Serratia proteamaculans (strain 568).